The chain runs to 259 residues: Apolipoprotein A-I (259 aa).

The signal sequence occupies residues Met-1–Ala-18. 2 consecutive repeat copies span residues Leu-67–Gly-88 and Pro-89–Asn-110. The interval Leu-67–Ala-259 is 10 X approximate tandem repeats. Methionine sulfoxide is present on Met-109. The stretch at Lys-111–Gln-121 is one 3; half-length repeat. Copy 4 of the repeat occupies Pro-122–Glu-143. The stretch at Pro-144 to Lys-161 is one 5; truncated repeat. Residues Val-162–Gly-183 form repeat 6. Residues Leu-184 to His-203 form a 7; truncated repeat. A Methionine sulfoxide modification is found at Met-189. The stretch at Pro-204 to Lys-225 is repeat 8. Residues Pro-226–Met-236 form a 9; half-length repeat. Position 236 is a methionine sulfoxide (Met-236). Copy 10 of the repeat occupies Pro-237–Ala-259.

It belongs to the apolipoprotein A1/A4/E family. In terms of assembly, homodimer. Interacts with APOA1BP and CLU. Component of a sperm activating protein complex (SPAP), consisting of APOA1, an immunoglobulin heavy chain, an immunoglobulin light chain and albumin. Interacts with NDRG1. Interacts with SCGB3A2. Interacts with NAXE and YJEFN3. In terms of processing, glycosylated. Post-translationally, palmitoylated. Phosphorylation sites are present in the extracellular medium. In terms of tissue distribution, major protein of plasma HDL, also found in chylomicrons.

It is found in the secreted. Participates in the reverse transport of cholesterol from tissues to the liver for excretion by promoting cholesterol efflux from tissues and by acting as a cofactor for the lecithin cholesterol acyltransferase (LCAT). As part of the SPAP complex, activates spermatozoa motility. The sequence is that of Apolipoprotein A-I (Apoa1) from Rattus norvegicus (Rat).